A 101-amino-acid chain; its full sequence is Transcription and mRNA export factor SUS1 (101 aa).

It belongs to the ENY2 family. Component of the nuclear pore complex (NPC)-associated TREX-2 complex (transcription and export complex 2), composed of at least SUS1, SAC3, THP1, SEM1, and CDC31. TREX-2 contains 2 SUS1 chains. The TREX-2 complex interacts with the nucleoporin NUP1. Component of the 1.8 MDa SAGA transcription coactivator-HAT complex. SAGA is built of 5 distinct domains with specialized functions. Within the SAGA complex, SUS1, SGF11, SGF73 and UBP8 form an additional subcomplex of SAGA called the DUB module (deubiquitination module). Interacts directly with THP1, SAC3, SGF11, and with the RNA polymerase II.

It localises to the nucleus. The protein resides in the nucleoplasm. Its subcellular location is the cytoplasm. The protein localises to the P-body. In terms of biological role, involved in mRNA export coupled transcription activation by association with both the TREX-2 and the SAGA complexes. At the promoters, SAGA is required for recruitment of the basal transcription machinery. It influences RNA polymerase II transcriptional activity through different activities such as TBP interaction and promoter selectivity, interaction with transcription activators, and chromatin modification through histone acetylation and deubiquitination. Within the SAGA complex, participates in a subcomplex required for deubiquitination of H2B and for the maintenance of steady-state H3 methylation levels. The TREX-2 complex functions in docking export-competent ribonucleoprotein particles (mRNPs) to the nuclear entrance of the nuclear pore complex (nuclear basket). TREX-2 participates in mRNA export and accurate chromatin positioning in the nucleus by tethering genes to the nuclear periphery. May also be involved in cytoplasmic mRNA decay by interaction with components of P-bodies. In Debaryomyces hansenii (strain ATCC 36239 / CBS 767 / BCRC 21394 / JCM 1990 / NBRC 0083 / IGC 2968) (Yeast), this protein is Transcription and mRNA export factor SUS1.